The primary structure comprises 209 residues: ATP-dependent dethiobiotin synthetase BioD (209 aa).

Position 13–18 (13–18 (DVGKTV)) interacts with ATP. T17 provides a ligand contact to Mg(2+). The active site involves K33. E100 serves as a coordination point for Mg(2+). ATP-binding positions include 100-103 (EGAG) and 184-186 (PRL).

This sequence belongs to the dethiobiotin synthetase family. Homodimer. Requires Mg(2+) as cofactor.

Its subcellular location is the cytoplasm. The enzyme catalyses (7R,8S)-7,8-diammoniononanoate + CO2 + ATP = (4R,5S)-dethiobiotin + ADP + phosphate + 3 H(+). It participates in cofactor biosynthesis; biotin biosynthesis; biotin from 7,8-diaminononanoate: step 1/2. Functionally, catalyzes a mechanistically unusual reaction, the ATP-dependent insertion of CO2 between the N7 and N8 nitrogen atoms of 7,8-diaminopelargonic acid (DAPA, also called 7,8-diammoniononanoate) to form a ureido ring. The polypeptide is ATP-dependent dethiobiotin synthetase BioD (Rhizorhabdus wittichii (strain DSM 6014 / CCUG 31198 / JCM 15750 / NBRC 105917 / EY 4224 / RW1) (Sphingomonas wittichii)).